A 1066-amino-acid polypeptide reads, in one-letter code: Isoleucine--tRNA ligase (1066 aa).

The short motif at 49-59 (PYVSGAIHLGT) is the 'HIGH' region element. The 'KMSKS' region signature appears at 625-629 (KMSKS). Lys-628 lines the ATP pocket.

It belongs to the class-I aminoacyl-tRNA synthetase family. IleS type 2 subfamily. In terms of assembly, monomer. It depends on Zn(2+) as a cofactor.

The protein localises to the cytoplasm. It carries out the reaction tRNA(Ile) + L-isoleucine + ATP = L-isoleucyl-tRNA(Ile) + AMP + diphosphate. Functionally, catalyzes the attachment of isoleucine to tRNA(Ile). As IleRS can inadvertently accommodate and process structurally similar amino acids such as valine, to avoid such errors it has two additional distinct tRNA(Ile)-dependent editing activities. One activity is designated as 'pretransfer' editing and involves the hydrolysis of activated Val-AMP. The other activity is designated 'posttransfer' editing and involves deacylation of mischarged Val-tRNA(Ile). The polypeptide is Isoleucine--tRNA ligase (Pyrococcus horikoshii (strain ATCC 700860 / DSM 12428 / JCM 9974 / NBRC 100139 / OT-3)).